Here is a 316-residue protein sequence, read N- to C-terminus: Apolipoprotein E (316 aa).

A signal peptide spans 1–18; that stretch reads MKVLWVALVITLLAGCQA. Repeat copies occupy residues 79–100, 101–122, 123–144, 145–166, 167–188, 189–210, 211–232, and 233–254. The segment at 79-254 is 8 X 22 AA approximate tandem repeats; it reads VLMDETMKEV…HLEEMREQLE (176 aa). Methionine sulfoxide is present on Met-142. An LDL and other lipoprotein receptors binding region spans residues 157–167; it reads HLRKLRKRLLR. A heparin-binding site is contributed by 161-164; sequence LRKR. Positions 209–289 are lipid-binding and lipoprotein association; it reads AATVGTLASQ…SWFEPLVEDM (81 aa). 228 to 235 is a heparin binding site; the sequence is HQKLRGRV. The segment at 265-316 is homooligomerization; that stretch reads SQMRLQAEAFQARLKSWFEPLVEDMQRQWAGLVEKVQLAMATSSTSAPSENH. Positions 277-289 are specificity for association with VLDL; it reads RLKSWFEPLVEDM.

It belongs to the apolipoprotein A1/A4/E family. As to quaternary structure, homotetramer. May interact with ABCA1; functionally associated with ABCA1 in the biogenesis of HDLs. May interact with APP/A4 amyloid-beta peptide; the interaction is extremely stable in vitro but its physiological significance is unclear. May interact with MAPT. May interact with MAP2. In the cerebrospinal fluid, interacts with secreted SORL1. Interacts with PMEL; this allows the loading of PMEL luminal fragment on ILVs to induce fibril nucleation. APOE exists as multiple glycosylated and sialylated glycoforms within cells and in plasma. The extent of glycosylation and sialylation are tissue and context specific. Post-translationally, glycated in plasma VLDL. In terms of processing, phosphorylated by FAM20C in the extracellular medium.

Its subcellular location is the secreted. It is found in the extracellular space. The protein localises to the extracellular matrix. The protein resides in the extracellular vesicle. It localises to the endosome. Its subcellular location is the multivesicular body. APOE is an apolipoprotein, a protein associating with lipid particles, that mainly functions in lipoprotein-mediated lipid transport between organs via the plasma and interstitial fluids. APOE is a core component of plasma lipoproteins and is involved in their production, conversion and clearance. Apolipoproteins are amphipathic molecules that interact both with lipids of the lipoprotein particle core and the aqueous environment of the plasma. As such, APOE associates with chylomicrons, chylomicron remnants, very low density lipoproteins (VLDL) and intermediate density lipoproteins (IDL) but shows a preferential binding to high-density lipoproteins (HDL). It also binds a wide range of cellular receptors including the LDL receptor/LDLR and the very low-density lipoprotein receptor/VLDLR that mediate the cellular uptake of the APOE-containing lipoprotein particles. Finally, APOE also has a heparin-binding activity and binds heparan-sulfate proteoglycans on the surface of cells, a property that supports the capture and the receptor-mediated uptake of APOE-containing lipoproteins by cells. In Lipotes vexillifer (Yangtze river dolphin), this protein is Apolipoprotein E (APOE).